The chain runs to 129 residues: Fluoride-specific ion channel FluC 2 (129 aa).

4 helical membrane passes run 3–23 (FLYV…MNLW), 32–52 (ATLA…QFLA), 59–79 (LVIL…FSAF), and 90–110 (GAWL…LIMV). The Na(+) site is built by G71 and T74.

The protein belongs to the fluoride channel Fluc/FEX (TC 1.A.43) family.

Its subcellular location is the cell membrane. It catalyses the reaction fluoride(in) = fluoride(out). Its activity is regulated as follows. Na(+) is not transported, but it plays an essential structural role and its presence is essential for fluoride channel function. In terms of biological role, fluoride-specific ion channel. Important for reducing fluoride concentration in the cell, thus reducing its toxicity. The polypeptide is Fluoride-specific ion channel FluC 2 (Listeria monocytogenes serotype 4b (strain F2365)).